Consider the following 78-residue polypeptide: Acyl carrier protein (78 aa).

The 76-residue stretch at 2–77 (SDTVERVKKI…DAVKFIDKAS (76 aa)) folds into the Carrier domain. Serine 37 is subject to O-(pantetheine 4'-phosphoryl)serine.

The protein belongs to the acyl carrier protein (ACP) family. Post-translationally, 4'-phosphopantetheine is transferred from CoA to a specific serine of apo-ACP by AcpS. This modification is essential for activity because fatty acids are bound in thioester linkage to the sulfhydryl of the prosthetic group.

It localises to the cytoplasm. It participates in lipid metabolism; fatty acid biosynthesis. Its function is as follows. Carrier of the growing fatty acid chain in fatty acid biosynthesis. This Bartonella quintana (strain Toulouse) (Rochalimaea quintana) protein is Acyl carrier protein.